The following is a 1380-amino-acid chain: Hepatocyte growth factor receptor (1380 aa).

The N-terminal stretch at 1–24 (MKAPAALAPGILVLLLTLVQKGGG) is a signal peptide. Topologically, residues 25–931 (ECREALAKSE…VIVQPDQNFT (907 aa)) are extracellular. The Sema domain maps to 27–513 (REALAKSEMN…TGKKITKIPL (487 aa)). N45 is a glycosylation site (N-linked (GlcNAc...) asparagine). 4 disulfides stabilise this stretch: C95/C101, C98/C156, C129/C137, and C170/C173. Residue N200 is glycosylated (N-linked (GlcNAc...) asparagine). 2 disulfide bridges follow: C296-C361 and C383-C395. N-linked (GlcNAc...) asparagine glycans are attached at residues N397 and N403. 4 cysteine pairs are disulfide-bonded: C518–C536, C524–C559, C527–C543, and C539–C549. N551 is a glycosylation site (N-linked (GlcNAc...) asparagine). IPT/TIG domains follow at residues 561–654 (PTIY…FSYV), 656–738 (PEIT…FSYQ), and 741–835 (PLVV…LIYV). O-linked (Man) threonine glycosylation is present at T580. N-linked (GlcNAc...) asparagine glycosylation is found at N592, N605, and N633. T675 and T760 each carry an O-linked (Man) threonine glycan. N784, N878, and N929 each carry an N-linked (GlcNAc...) asparagine glycan. A helical membrane pass occupies residues 932-954 (GLIVGVVSISVILLSSLGLFLWL). Residues 955-1380 (KKRKQIKDLG…HDTVDGEVDT (426 aa)) are Cytoplasmic-facing. S965 carries the phosphoserine modification. A Phosphothreonine modification is found at T976. Phosphoserine is present on residues S989, S996, and S999. Y1002 is modified (phosphotyrosine). The 268-residue stretch at 1077–1344 (VHFNEVIGRG…RISAIFSTFI (268 aa)) folds into the Protein kinase domain. ATP-binding positions include 1083–1091 (IGRGHFGCV) and K1109. D1203 functions as the Proton acceptor in the catalytic mechanism. An interaction with RANBP9 region spans residues 1211-1380 (LDGKFTVKVA…HDTVDGEVDT (170 aa)). Y1229 is subject to Phosphotyrosine. A phosphotyrosine; by autocatalysis mark is found at Y1233 and Y1234. T1288 is subject to Phosphothreonine. The interval 1319 to 1358 (WHPKAEMRPSFTELVSRISAIFSTFIGEHYVHVNATYVNV) is interaction with MUC20. Y1348 and Y1355 each carry phosphotyrosine; by autocatalysis. Phosphotyrosine is present on Y1364.

This sequence belongs to the protein kinase superfamily. Tyr protein kinase family. As to quaternary structure, heterodimer made of an alpha chain (50 kDa) and a beta chain (145 kDa) which are disulfide linked. Binds PLXNB1. Interacts when phosphorylated with downstream effectors including STAT3, PIK3R1, SRC, PCLG1, GRB2 and GAB1. Interacts with SPSB1, SPSB2 and SPSB4. Interacts with INPP5D/SHIP1. When phosphorylated at Tyr-1355, interacts with INPPL1/SHIP2. Interacts with RANBP9 and RANBP10, as well as SPSB1, SPSB2, SPSB3 and SPSB4. SPSB1 binding occurs in the presence and in the absence of HGF, however HGF treatment has a positive effect on this interaction. Interacts with MUC20; prevents interaction with GRB2 and suppresses hepatocyte growth factor-induced cell proliferation. Interacts with GRB10. Interacts with PTPN1 and PTPN2. Interacts with HSP90AA1 and HSP90AB1; the interaction suppresses MET kinase activity. Interacts with tensin TNS3. Interacts (when phosphorylated) with tensin TNS4 (via SH2 domain); the interaction increases MET protein stability by inhibiting MET endocytosis and subsequent lysosomal degradation. Post-translationally, autophosphorylated in response to ligand binding on Tyr-1233 and Tyr-1234 in the kinase domain leading to further phosphorylation of Tyr-1348 and Tyr-1355 in the C-terminal multifunctional docking site. Dephosphorylated by PTPRJ at Tyr-1348 and Tyr-1364. Dephosphorylated by PTPN1 and PTPN2. Ubiquitinated. Ubiquitination by CBL regulates the receptor stability and activity through proteasomal degradation. In terms of processing, O-mannosylation of IPT/TIG domains by TMEM260 is required for protein maturation. O-mannosylated residues are composed of single mannose glycans that are not elongated or modified.

It localises to the membrane. The enzyme catalyses L-tyrosyl-[protein] + ATP = O-phospho-L-tyrosyl-[protein] + ADP + H(+). Its activity is regulated as follows. In its inactive state, the C-terminal tail interacts with the catalytic domain and inhibits the kinase activity. Upon ligand binding, the C-terminal tail is displaced and becomes phosphorylated, thus increasing the kinase activity. Its function is as follows. Receptor tyrosine kinase that transduces signals from the extracellular matrix into the cytoplasm by binding to hepatocyte growth factor/HGF ligand. Regulates many physiological processes including proliferation, scattering, morphogenesis and survival. Ligand binding at the cell surface induces autophosphorylation of MET on its intracellular domain that provides docking sites for downstream signaling molecules. Following activation by ligand, interacts with the PI3-kinase subunit PIK3R1, PLCG1, SRC, GRB2, STAT3 or the adapter GAB1. Recruitment of these downstream effectors by MET leads to the activation of several signaling cascades including the RAS-ERK, PI3 kinase-AKT, or PLCgamma-PKC. The RAS-ERK activation is associated with the morphogenetic effects while PI3K/AKT coordinates prosurvival effects. During embryonic development, MET signaling plays a role in gastrulation, development and migration of muscles and neuronal precursors, angiogenesis and kidney formation. In adults, participates in wound healing as well as organ regeneration and tissue remodeling. Also promotes differentiation and proliferation of hematopoietic cells. The chain is Hepatocyte growth factor receptor (MET) from Echinops telfairi (Lesser hedgehog tenrec).